Consider the following 675-residue polypeptide: PML-RARA-regulated adapter molecule 1 (675 aa).

A compositionally biased stretch (polar residues) spans 1–19; that stretch reads MGSNQDFRNLQAKFQTSQP. 2 disordered regions span residues 1-473 and 523-562; these read MGSN…GPIN and TDDS…PQQL. Positions 23–35 are enriched in basic and acidic residues; that stretch reads ELFRKTPKPELNK. Polar residues predominate over residues 43-58; the sequence is TELSEQPKKSSQSELS. Positions 141 to 150 are enriched in basic and acidic residues; sequence PKPEFGELSK. Polar residues-rich tracts occupy residues 224 to 242, 251 to 264, and 322 to 331; these read RKSQ…SPSK, HSPQ…PKNN, and LQPSDLTRAS. Ser-374 carries the phosphoserine modification. A compositionally biased stretch (polar residues) spans 407 to 422; it reads SECSLPSASAGSSPQC. The span at 462–471 shows a compositional bias: pro residues; it reads PAKPALPPGP. The segment covering 537–546 has biased composition (polar residues); sequence LSTQQATRWP. The SH3 domain occupies 578-656; sequence KAEREFRKKF…PRTALLPLET (79 aa).

In terms of assembly, interacts with SKAP2, LCP2 and DBNL. May interact with LYN. Interacts with NEK6. In terms of processing, may be phosphorylated on tyrosines. In terms of tissue distribution, expressed in bone marrow and mature neutrophils. Weakly expressed in macrophages and mast cells.

Functionally, may be involved in integrin signaling in neutrophils. Binds to PtdIns(4)P. In Mus musculus (Mouse), this protein is PML-RARA-regulated adapter molecule 1 (Pram1).